The chain runs to 1177 residues: MDVYPPRRQGLPRARSPGGSSRGSPSVSCSRLRQVQSILTQSSKSRPDGILCILGIDSRYNEGCRELANYLLFGLYNQNTSDFEKTGFSEEVLDDVIILIKSDSVHLYCNPVNFRYLLPYVAHWRNLHFHCMTENEYEDEEAAEEFKITSFVDMVRDCSRIGIPYSSQGHLQIFDMFVVEKWPIVQAFALEGIGGDGFFTMKYELQDVSLNLWNVYSKMDPMSLESLLSDDLVAFEHQWTSFFANFDTEIPFLLELSESQAGEPFRSYFSHGMISSHITENSPNRQPFVLFGNHSTRENLNAGNFNFPSEGHLVRSTGPGGSFAKHMVAQCVSPKGPLACSRTYFFGATHVPYLGGDSKLPKKTEQIRLLSQIYAAVIEAVLAGIACYAKTSSLTKAKEVAEQTLGSGLDSFELIPFKAALRSKMTFHIHAVNNQGRIVPLDSEDSLSFVKTACMAVYDIPDLLGGNGCLGSVVFSESFLTSQILVKEKDGTVTTETSSVVLTAAVPRFCSWLVEDNEVKLSEKTQQAVRGDESFLGTYLTGGEGAYLYSSNLQSWPEEGNVHFFSSGLLFSHCRHRSIIISKDHMNSISFYDGDSTSTVAALLIDFKSSLLPHLPVHFHGSSNFLMIALFPKSKIYQAFYSEVFSLWKQQDNSGISLKVIQEDGLSVEQKRLHSSAQKLFSALSQPAGEKRSSLKLLSAKLPELDWFLQHFAISSISQEPVMRTHLPVLLQQAEINTTHRIESDKVIISIVTGLPGCHASELCAFLVTLHKECGRWMVYRQIMDSSECFHAAHFQRYLSSALEAQQNRSARQSAYIRKKTRLLVVLQGYTDVIDVVQALQTHPDSNVKASFTIGAITACVEPMSCYMEHRFLFPKCLDQCSQGLVSNVVFTSHTTEQRHPLLVQLQSLIRAANPAAAFILAENGIVTRNEDIELILSENSFSSPEMLRSRYLMYPGWYEGKLNAGSVYPLMVQICVWFGRPLEKTRFVAKCKAIQSSIKPSPFSGNIYHILGKVKFSDSERTMEVCYNTLANSLSIMPVLEGPTPPPDSKSVSQDSSGQQECYLVFIGCSLKEDSIKDWLRQSAKQKPQRKALKTRGMLTQQEIRSIHVKRHLEPLPAGYFYNGTQFVNFFGDKTDFHPLMDQFMNDYVEEANREIEKYNQELEQQEYHDLFELKP.

A disordered region spans residues 1–27 (MDVYPPRRQGLPRARSPGGSSRGSPSV). The span at 11–27 (LPRARSPGGSSRGSPSV) shows a compositional bias: low complexity.

In terms of assembly, interacts with ARL3.

May act as an effector for ARL3. In Homo sapiens (Human), this protein is Dynein axonemal assembly factor 9.